A 503-amino-acid polypeptide reads, in one-letter code: Maturase K (503 aa).

It belongs to the intron maturase 2 family. MatK subfamily.

It is found in the plastid. Its subcellular location is the chloroplast. Usually encoded in the trnK tRNA gene intron. Probably assists in splicing its own and other chloroplast group II introns. This is Maturase K from Silene latifolia (White campion).